A 959-amino-acid polypeptide reads, in one-letter code: Autophagy-related protein 18g (959 aa).

WD repeat units lie at residues 376-416 and 438-479; these read AHTS…SHNA and ITSA…AAFQ. A disordered region spans residues 802-832; that stretch reads GSIESAESSEEGSTKQMENLHDSDHMSNSIK.

It belongs to the WD repeat PROPPIN family. In terms of assembly, component of the PI(3,5)P2 regulatory complex at least composed of ATG18, SAC/FIG4, FAB1 and VAC14. As to expression, expressed in leaves.

The protein localises to the preautophagosomal structure membrane. Its subcellular location is the vacuole membrane. The PI(3,5)P2 regulatory complex regulates both the synthesis and turnover of phosphatidylinositol 3,5-bisphosphate (PtdIns(3,5)P2). Required for autophagy. This chain is Autophagy-related protein 18g (ATG18G), found in Arabidopsis thaliana (Mouse-ear cress).